Consider the following 163-residue polypeptide: Nucleotide-binding protein Dvul_1191 (163 aa).

The protein belongs to the YajQ family.

Functionally, nucleotide-binding protein. This Nitratidesulfovibrio vulgaris (strain DP4) (Desulfovibrio vulgaris) protein is Nucleotide-binding protein Dvul_1191.